The sequence spans 139 residues: MTAPTPEFRNKKQRKQQVKLRTPGKAIAKYVRMSPRKVRLVVDVIRGKSVSDAEAILRFLPKSASEPVAKVLNSAKHNALHNDEMLEDRLVITAAYVDAGPTLKRLIPRARGSANILKKRTSHITIIVGERNDTRGGKR.

The segment at 1 to 21 (MTAPTPEFRNKKQRKQQVKLR) is disordered.

This sequence belongs to the universal ribosomal protein uL22 family. As to quaternary structure, part of the 50S ribosomal subunit.

In terms of biological role, this protein binds specifically to 23S rRNA; its binding is stimulated by other ribosomal proteins, e.g. L4, L17, and L20. It is important during the early stages of 50S assembly. It makes multiple contacts with different domains of the 23S rRNA in the assembled 50S subunit and ribosome. Functionally, the globular domain of the protein is located near the polypeptide exit tunnel on the outside of the subunit, while an extended beta-hairpin is found that lines the wall of the exit tunnel in the center of the 70S ribosome. The sequence is that of Large ribosomal subunit protein uL22 from Deinococcus deserti (strain DSM 17065 / CIP 109153 / LMG 22923 / VCD115).